A 208-amino-acid polypeptide reads, in one-letter code: Ribonuclease HII (208 aa).

The RNase H type-2 domain occupies 17–208 (LRVCGIDEAG…SFRLRQLGEK (192 aa)). A divalent metal cation is bound by residues Asp23, Glu24, and Asp120.

It belongs to the RNase HII family. Mn(2+) serves as cofactor. It depends on Mg(2+) as a cofactor.

It is found in the cytoplasm. The catalysed reaction is Endonucleolytic cleavage to 5'-phosphomonoester.. In terms of biological role, endonuclease that specifically degrades the RNA of RNA-DNA hybrids. The sequence is that of Ribonuclease HII from Chlorobium luteolum (strain DSM 273 / BCRC 81028 / 2530) (Pelodictyon luteolum).